A 126-amino-acid polypeptide reads, in one-letter code: Small ribosomal subunit protein eS6 (126 aa).

It belongs to the eukaryotic ribosomal protein eS6 family.

The chain is Small ribosomal subunit protein eS6 from Thermococcus sibiricus (strain DSM 12597 / MM 739).